The sequence spans 173 residues: Crossover junction endodeoxyribonuclease RuvC (173 aa).

Active-site residues include Asp8, Glu67, and Asp139. The Mg(2+) site is built by Asp8, Glu67, and Asp139.

The protein belongs to the RuvC family. As to quaternary structure, homodimer which binds Holliday junction (HJ) DNA. The HJ becomes 2-fold symmetrical on binding to RuvC with unstacked arms; it has a different conformation from HJ DNA in complex with RuvA. In the full resolvosome a probable DNA-RuvA(4)-RuvB(12)-RuvC(2) complex forms which resolves the HJ. Mg(2+) is required as a cofactor.

Its subcellular location is the cytoplasm. The catalysed reaction is Endonucleolytic cleavage at a junction such as a reciprocal single-stranded crossover between two homologous DNA duplexes (Holliday junction).. Functionally, the RuvA-RuvB-RuvC complex processes Holliday junction (HJ) DNA during genetic recombination and DNA repair. Endonuclease that resolves HJ intermediates. Cleaves cruciform DNA by making single-stranded nicks across the HJ at symmetrical positions within the homologous arms, yielding a 5'-phosphate and a 3'-hydroxyl group; requires a central core of homology in the junction. The consensus cleavage sequence is 5'-(A/T)TT(C/G)-3'. Cleavage occurs on the 3'-side of the TT dinucleotide at the point of strand exchange. HJ branch migration catalyzed by RuvA-RuvB allows RuvC to scan DNA until it finds its consensus sequence, where it cleaves and resolves the cruciform DNA. In Vibrio vulnificus (strain CMCP6), this protein is Crossover junction endodeoxyribonuclease RuvC.